The chain runs to 334 residues: Anthranilate phosphoribosyltransferase (334 aa).

Residues glycine 79, 82–83 (GD), serine 87, 89–92 (NIST), 107–115 (KHGNRSISS), and serine 119 contribute to the 5-phospho-alpha-D-ribose 1-diphosphate site. Glycine 79 contributes to the anthranilate binding site. A Mg(2+)-binding site is contributed by serine 91. Asparagine 110 is an anthranilate binding site. Arginine 165 is a binding site for anthranilate. Residues aspartate 224 and glutamate 225 each contribute to the Mg(2+) site.

This sequence belongs to the anthranilate phosphoribosyltransferase family. In terms of assembly, homodimer. Mg(2+) is required as a cofactor.

The enzyme catalyses N-(5-phospho-beta-D-ribosyl)anthranilate + diphosphate = 5-phospho-alpha-D-ribose 1-diphosphate + anthranilate. Its pathway is amino-acid biosynthesis; L-tryptophan biosynthesis; L-tryptophan from chorismate: step 2/5. In terms of biological role, catalyzes the transfer of the phosphoribosyl group of 5-phosphorylribose-1-pyrophosphate (PRPP) to anthranilate to yield N-(5'-phosphoribosyl)-anthranilate (PRA). The protein is Anthranilate phosphoribosyltransferase of Streptococcus pneumoniae (strain ATCC 700669 / Spain 23F-1).